The primary structure comprises 427 residues: Enolase (427 aa).

(2R)-2-phosphoglycerate is bound at residue Gln-163. Glu-205 acts as the Proton donor in catalysis. Mg(2+) contacts are provided by Asp-242, Glu-288, and Asp-315. Residues Lys-340, Arg-369, Ser-370, and Lys-391 each contribute to the (2R)-2-phosphoglycerate site. Residue Lys-340 is the Proton acceptor of the active site.

The protein belongs to the enolase family. The cofactor is Mg(2+).

Its subcellular location is the cytoplasm. It localises to the secreted. The protein resides in the cell surface. The enzyme catalyses (2R)-2-phosphoglycerate = phosphoenolpyruvate + H2O. It functions in the pathway carbohydrate degradation; glycolysis; pyruvate from D-glyceraldehyde 3-phosphate: step 4/5. Catalyzes the reversible conversion of 2-phosphoglycerate (2-PG) into phosphoenolpyruvate (PEP). It is essential for the degradation of carbohydrates via glycolysis. The chain is Enolase from Amoebophilus asiaticus (strain 5a2).